Reading from the N-terminus, the 319-residue chain is L-threo-3-hydroxyaspartate ammonia-lyase (319 aa).

An N6-(pyridoxal phosphate)lysine modification is found at lysine 53. Pyridoxal 5'-phosphate is bound by residues asparagine 80, glycine 179–methionine 183, and threonine 304.

It belongs to the serine/threonine dehydratase family. In terms of assembly, may be either a monomer or a homodimer. It depends on pyridoxal 5'-phosphate as a cofactor. The cofactor is Mn(2+). Mg(2+) is required as a cofactor. Ca(2+) serves as cofactor.

The catalysed reaction is (3S)-3-hydroxy-L-aspartate = oxaloacetate + NH4(+). Is strongly inhibited by hydroxylamine and EDTA in vitro. Its function is as follows. Catalyzes the deamination of L-threo-3-hydroxyaspartate to oxaloacetate and ammonia. Shows a high specificity towards L-threo-3-hydroxyaspartate as other 3-hydroxyaminoacids, i.e. D,L-erythro- and D-threo-3-hydroxyaspartate, D-threonine, L-threonine, D,L-allothreonine, D,L-threo-3-phenylserine, D-serine, and L-serine, are not substrates for this enzyme. Exhibits no detectable serine and aspartate racemase activity. Might play a role in the detoxification of naturally occurring 3-hydroxyaspartate in Pseudomonas sp. T62 cells. This is L-threo-3-hydroxyaspartate ammonia-lyase from Pseudomonas sp.